A 120-amino-acid polypeptide reads, in one-letter code: Flagellar protein FliT (120 aa).

The required for homodimerization stretch occupies residues 1–50 (MNDSSLSLKKWHALSALSNTMLSLAQSGKWDELIEQEVAYVSLVEKISIT). Residues 59 to 97 (IQDQAMVMLNNVLQNEMTLKTLLQERMDELHGLMAQTGK) are fliD binding.

The protein belongs to the FliT family. Homodimer. Interacts with FliD and FlhC.

It is found in the cytoplasm. It localises to the cytosol. Functionally, dual-function protein that regulates the transcription of class 2 flagellar operons and that also acts as an export chaperone for the filament-capping protein FliD. As a transcriptional regulator, acts as an anti-FlhDC factor; it directly binds FlhC, thus inhibiting the binding of the FlhC/FlhD complex to class 2 promoters, resulting in decreased expression of class 2 flagellar operons. As a chaperone, effects FliD transition to the membrane by preventing its premature polymerization, and by directing it to the export apparatus. This Enterobacter sp. (strain 638) protein is Flagellar protein FliT.